A 268-amino-acid chain; its full sequence is Ribosomal RNA small subunit methyltransferase A (268 aa).

S-adenosyl-L-methionine-binding residues include asparagine 18, leucine 20, glycine 45, glutamate 66, aspartate 91, and asparagine 112.

It belongs to the class I-like SAM-binding methyltransferase superfamily. rRNA adenine N(6)-methyltransferase family. RsmA subfamily.

It is found in the cytoplasm. It carries out the reaction adenosine(1518)/adenosine(1519) in 16S rRNA + 4 S-adenosyl-L-methionine = N(6)-dimethyladenosine(1518)/N(6)-dimethyladenosine(1519) in 16S rRNA + 4 S-adenosyl-L-homocysteine + 4 H(+). Its function is as follows. Specifically dimethylates two adjacent adenosines (A1518 and A1519) in the loop of a conserved hairpin near the 3'-end of 16S rRNA in the 30S particle. May play a critical role in biogenesis of 30S subunits. In Vibrio vulnificus (strain CMCP6), this protein is Ribosomal RNA small subunit methyltransferase A.